The sequence spans 420 residues: S-adenosylmethionine synthase (420 aa).

His-16 provides a ligand contact to ATP. A Mg(2+)-binding site is contributed by Asp-18. Glu-44 serves as a coordination point for K(+). Residues Glu-57 and Gln-100 each contribute to the L-methionine site. Positions 100–110 (QSADIAQGVDK) are flexible loop. ATP contacts are provided by residues 175-177 (DGK), 251-252 (KF), Asp-260, 266-267 (RK), Ala-283, and Lys-287. Asp-260 is an L-methionine binding site. Lys-291 lines the L-methionine pocket.

It belongs to the AdoMet synthase family. Homotetramer; dimer of dimers. Mg(2+) is required as a cofactor. K(+) serves as cofactor.

It localises to the cytoplasm. The catalysed reaction is L-methionine + ATP + H2O = S-adenosyl-L-methionine + phosphate + diphosphate. It functions in the pathway amino-acid biosynthesis; S-adenosyl-L-methionine biosynthesis; S-adenosyl-L-methionine from L-methionine: step 1/1. In terms of biological role, catalyzes the formation of S-adenosylmethionine (AdoMet) from methionine and ATP. The overall synthetic reaction is composed of two sequential steps, AdoMet formation and the subsequent tripolyphosphate hydrolysis which occurs prior to release of AdoMet from the enzyme. The sequence is that of S-adenosylmethionine synthase from Trichodesmium erythraeum (strain IMS101).